Here is a 248-residue protein sequence, read N- to C-terminus: MKIDVLTLFPEMFQSPFEESIFKRATDNNLVRLEIHNFRDFAHDKHHAVDDSPYGGGAGMLLKPEPLFEAVEDVLREDPTPAPVILLSPQGRSFNQEVARELAKHERLIIICGHYEGFDERVREHLSTDEISIGDFVLTGGELAAMVVIDAVSRLIPGVLGSGESSQDDSHSNGLLEHPHYTRPPVFRGWGIPDVLLSGNHAQINRWRRKESLRRTLKRRPDMFEKIPLSKADRKLVDEILAEENTQG.

S-adenosyl-L-methionine is bound by residues G113 and 133–138; that span reads IGDFVL.

It belongs to the RNA methyltransferase TrmD family. Homodimer.

The protein resides in the cytoplasm. It carries out the reaction guanosine(37) in tRNA + S-adenosyl-L-methionine = N(1)-methylguanosine(37) in tRNA + S-adenosyl-L-homocysteine + H(+). Its function is as follows. Specifically methylates guanosine-37 in various tRNAs. This Dehalococcoides mccartyi (strain ATCC BAA-2100 / JCM 16839 / KCTC 5957 / BAV1) protein is tRNA (guanine-N(1)-)-methyltransferase.